The primary structure comprises 678 residues: ATP-dependent RNA helicase DHX58 (678 aa).

A Helicase ATP-binding domain is found at 11-188 (IMPALEGKNI…DGAINHVLQL (178 aa)). 24–31 (LPTGAGKT) serves as a coordination point for ATP. The DECH box motif lies at 131 to 134 (DECH). The 165-residue stretch at 350–514 (KLEMLEKILQ…QAVAAVQKMD (165 aa)) folds into the Helicase C-terminal domain. A coiled-coil region spans residues 489 to 546 (ELKRELINEALETLMEQAVAAVQKMDQAEYQAKIRDLQQAALTKRAAQAAQRENQRQQ). The RLR CTR domain occupies 539-669 (QRENQRQQFP…PDFDFLQHCA (131 aa)). Zn(2+)-binding residues include Cys-556, Cys-559, Cys-612, and Cys-615. Positions 572-655 (VEGTHHVNVN…RIQAKKWSRV (84 aa)) are RNA-binding.

It belongs to the helicase family. RLR subfamily. Monomer in the absence of dsRNA. Homodimer in the presence of dsRNA. Interacts with RIGI (via CARD domain), MAVS/IPS1 and DDX60. Found in a complex with RIGI and IFIH1/MDA5. Interacts with ANKRD17. Directly interacts with ATG5 and ATG12, either as ATG5 and ATG12 monomers or as ATG12-ATG5 conjugates. In terms of assembly, (Microbial infection) Interacts (via helicase C-terminal domain) with non-structural protein V of paramyxoviruses including human parainfluenza 2 virus, human parainfluenza 5 virus, measles virus, mumps virus, hendra virus and nipah virus. Expressed in testis, nerve and spleen. Also expressed in the brain.

It is found in the cytoplasm. The catalysed reaction is ATP + H2O = ADP + phosphate + H(+). Its function is as follows. Acts as a regulator of RIGI and IFIH1/MDA5 mediated antiviral signaling. Cannot initiate antiviral signaling as it lacks the CARD domain required for activating MAVS/IPS1-dependent signaling events. Can have both negative and positive regulatory functions related to RIGI and IFIH1/MDA5 signaling and this role in regulating signaling may be complex and could probably depend on characteristics of the infecting virus or target cells, or both. Its inhibitory action on RIG-I signaling may involve the following mechanisms: competition with RIGI for binding to the viral RNA, binding to RIGI and inhibiting its dimerization and interaction with MAVS/IPS1, competing with IKBKE in its binding to MAVS/IPS1 thereby inhibiting activation of interferon regulatory factor 3 (IRF3). Its positive regulatory role may involve unwinding or stripping nucleoproteins of viral RNA thereby facilitating their recognition by RIGI and IFIH1/MDA5. Involved in the innate immune response to various RNA viruses and some DNA viruses such as poxviruses and coronavirus SARS-CoV-2, and also to the bacterial pathogen Listeria monocytogenes. Can bind both ssRNA and dsRNA, with a higher affinity for dsRNA. Shows a preference to 5'-triphosphorylated RNA, although it can recognize RNA lacking a 5'-triphosphate. This chain is ATP-dependent RNA helicase DHX58, found in Homo sapiens (Human).